The primary structure comprises 504 residues: MHMVGKRVRTRFAPSPTGYLHVGGLRTALYNYLFAKKMNGDFIIRIEDTDQSRKVEGAQQNLIKTLEWAGLVPDESPVHGGNFGPYLQSERLELYAGYCRQLLEDGTAYYCFATSEELEENRQLQMKQGLQPKYNRKWLPEDMGGSMPRSESEKMLASGAPYVIRMKVPDYVSVWFEDIIRGPIEFDSATIDDQVLMKSDGFPTYHFASVIDDHLMEFTHIIRGEEWLPSMPKHLLLYEFFGWEPPKYAHLPLLLNPDRSKLSKRQGDVAVEDYIQKGYSQEAIINFIALLGWNEGEGCEQEVYSMEQLIDRFSLERVGKAGSIFTIDKLNWLEKQYIKNRPAEKIIETIRPLLQEELSSKETMLDREVITGDDYLRQVIELMRERVGFEHEFVTFSSYFFFEPETWEEEAVKKRWTSDTPALLSEFLPTLEGLPEFTSDAIEAALKAFVEPKGLKAAVLIHPLRILASGVSFGPSLYHMLEVLGREAVLRRIRKGMECITVPA.

Residues 14 to 24 (PSPTGYLHVGG) carry the 'HIGH' region motif. The 'KMSKS' region motif lies at 261-265 (KLSKR). An ATP-binding site is contributed by K264.

This sequence belongs to the class-I aminoacyl-tRNA synthetase family. Glutamate--tRNA ligase type 1 subfamily. As to quaternary structure, monomer.

It localises to the cytoplasm. It carries out the reaction tRNA(Glu) + L-glutamate + ATP = L-glutamyl-tRNA(Glu) + AMP + diphosphate. Catalyzes the attachment of glutamate to tRNA(Glu) in a two-step reaction: glutamate is first activated by ATP to form Glu-AMP and then transferred to the acceptor end of tRNA(Glu). In Chlorobium luteolum (strain DSM 273 / BCRC 81028 / 2530) (Pelodictyon luteolum), this protein is Glutamate--tRNA ligase.